The primary structure comprises 349 residues: Protein RecA (349 aa).

ATP is bound at residue 69–76; the sequence is GPESSGKT.

This sequence belongs to the RecA family.

The protein resides in the cytoplasm. Functionally, can catalyze the hydrolysis of ATP in the presence of single-stranded DNA, the ATP-dependent uptake of single-stranded DNA by duplex DNA, and the ATP-dependent hybridization of homologous single-stranded DNAs. It interacts with LexA causing its activation and leading to its autocatalytic cleavage. This Crocosphaera subtropica (strain ATCC 51142 / BH68) (Cyanothece sp. (strain ATCC 51142)) protein is Protein RecA.